We begin with the raw amino-acid sequence, 89 residues long: Small ribosomal subunit protein uS15 (89 aa).

Belongs to the universal ribosomal protein uS15 family. In terms of assembly, part of the 30S ribosomal subunit. Forms a bridge to the 50S subunit in the 70S ribosome, contacting the 23S rRNA.

Functionally, one of the primary rRNA binding proteins, it binds directly to 16S rRNA where it helps nucleate assembly of the platform of the 30S subunit by binding and bridging several RNA helices of the 16S rRNA. In terms of biological role, forms an intersubunit bridge (bridge B4) with the 23S rRNA of the 50S subunit in the ribosome. This Bacillus pumilus (strain SAFR-032) protein is Small ribosomal subunit protein uS15.